A 130-amino-acid polypeptide reads, in one-letter code: Cholecystokinin (130 aa).

The N-terminal stretch at 1–20 (MYGGICICVLLAALSVSSLG) is a signal peptide. The propeptide occupies 21-48 (QQPAGSHDGSPVAAELQQSLTEPHRHSR). The disordered stretch occupies residues 21–63 (QQPAGSHDGSPVAAELQQSLTEPHRHSRAPSSAGPLKPAPRLD). The residue at position 112 (Tyr-112) is a Sulfotyrosine. A Phenylalanine amide modification is found at Phe-118. A propeptide spanning residues 122-130 (SAEEYEYSS) is cleaved from the precursor. Sulfotyrosine occurs at positions 126 and 128.

It belongs to the gastrin/cholecystokinin family. The precursor is cleaved by proteases to produce a number of active cholecystokinins. In terms of tissue distribution, in the small intestine, the major production site is around the vitelline diverticulum.

The protein localises to the secreted. In terms of biological role, this peptide hormone induces gall bladder contraction and the release of pancreatic enzymes in the gut. Its function in the brain is not clear. It also decreases food intake and regulates gastrointestinal physiological processes. This chain is Cholecystokinin (CCK), found in Gallus gallus (Chicken).